The sequence spans 726 residues: PWWP domain-containing protein 2 (726 aa).

The segment covering 1–10 (MSTESERIES) has biased composition (basic and acidic residues). The disordered stretch occupies residues 1 to 26 (MSTESERIESVSEANASSLEVGNDQM). Residues 12–26 (SEANASSLEVGNDQM) show a composition bias toward polar residues. The 62-residue stretch at 199–260 (DSDLVWAKVR…ASRIKPFRQH (62 aa)) folds into the PWWP domain. The tract at residues 392 to 441 (APKISPAEEQSSLVEVSDPEPTKSKQVYTKRRKTNLQTEQSSLVEVSDPD) is disordered. Positions 426-435 (NLQTEQSSLV) are enriched in polar residues. Short sequence motifs (nuclear localization signal) lie at residues 460–467 (KKKEKTLA) and 495–502 (KKRKVVQS). 2 disordered regions span residues 472–545 (EKRV…PQKA) and 568–726 (TRLL…VSAE). Residues 494-512 (EKKRKVVQSKVPKSTKKIK) are compositionally biased toward basic residues. A compositionally biased stretch (polar residues) spans 606 to 634 (SPSTTLSSPHAASVTKTTSGKSNSVSLDH). Over residues 658–688 (LESRDLKDSSKEQVVHEDKKEAANVADEKSI) the composition is skewed to basic and acidic residues.

The protein belongs to the PDP family. Interacts with DEK3. Binds to MSI4/FVE and MSI5. Component of the PRC2 (polycomb repressive complex 2) complex which regulates histone methylation on histone H3K27.

It localises to the nucleus. In terms of biological role, together with PDP1, PDP3 and PDP6, interacts with MSI4/FVE and MSI5 to suppress FLC, MAF4 and MAF5 expression by regulating the function of the PRC2 complex and modulating H3K27me3 level, thereby promoting flowering. The protein is PWWP domain-containing protein 2 of Arabidopsis thaliana (Mouse-ear cress).